The primary structure comprises 325 residues: Formimidoylglutamase (325 aa).

Mn(2+) contacts are provided by His125, Asp155, His157, Asp159, Cys246, and Asp248.

The protein belongs to the arginase family. Mn(2+) serves as cofactor.

It carries out the reaction N-formimidoyl-L-glutamate + H2O = formamide + L-glutamate. It participates in amino-acid degradation; L-histidine degradation into L-glutamate; L-glutamate from N-formimidoyl-L-glutamate (hydrolase route): step 1/1. In terms of biological role, catalyzes the conversion of N-formimidoyl-L-glutamate to L-glutamate and formamide. This is Formimidoylglutamase from Ralstonia nicotianae (strain ATCC BAA-1114 / GMI1000) (Ralstonia solanacearum).